Here is a 446-residue protein sequence, read N- to C-terminus: Argininosuccinate synthase (446 aa).

Residues 17–25 (AFSGGLDTS) and Ala-43 each bind ATP. Residue Tyr-99 participates in L-citrulline binding. Gly-129 and Thr-131 together coordinate ATP. Thr-131, Asn-135, and Asp-136 together coordinate L-aspartate. Asn-135 provides a ligand contact to L-citrulline. Residue Asp-136 participates in ATP binding. The L-citrulline site is built by Arg-139 and Ser-192. Asp-194 contributes to the ATP binding site. 3 residues coordinate L-citrulline: Thr-201, Glu-203, and Glu-280.

The protein belongs to the argininosuccinate synthase family. Type 2 subfamily. Homotetramer.

The protein resides in the cytoplasm. It catalyses the reaction L-citrulline + L-aspartate + ATP = 2-(N(omega)-L-arginino)succinate + AMP + diphosphate + H(+). The protein operates within amino-acid biosynthesis; L-arginine biosynthesis; L-arginine from L-ornithine and carbamoyl phosphate: step 2/3. The polypeptide is Argininosuccinate synthase (Burkholderia thailandensis (strain ATCC 700388 / DSM 13276 / CCUG 48851 / CIP 106301 / E264)).